We begin with the raw amino-acid sequence, 494 residues long: Solute carrier family 2, facilitated glucose transporter member 3 (494 aa).

At 1–10 (MGTTKVTPYL) the chain is on the cytoplasmic side. A helical membrane pass occupies residues 11–32 (IFATSVAAIGSFQFGYNTGVIN). Residues 33–64 (APEMIIRDFLNYTLDEKLDEPPSRLLLTNLWS) lie on the Extracellular side of the membrane. Asparagine 43 carries an N-linked (GlcNAc...) asparagine glycan. A helical transmembrane segment spans residues 65-84 (LSVAIFSVGGMIGSFSVGLF). At 85 to 89 (NRFGR) the chain is on the cytoplasmic side. A helical membrane pass occupies residues 90 to 110 (RNSMLIVNLLAVIGGCLMGFC). Over 111–117 (KISESVE) the chain is Extracellular. The helical transmembrane segment at 118 to 141 (MLILGRLVIGVFCGLCTGFVPMYI) threads the bilayer. Over 142 to 152 (GEISPTALRGA) the chain is Cytoplasmic. Residues 153–173 (FGTLNQLGIVIGILVAQIFGL) form a helical membrane-spanning segment. A D-glucose-binding site is contributed by glutamine 158. Topologically, residues 174–182 (EIILGSEVL) are extracellular. The helical transmembrane segment at 183–203 (WPVLLGFTIIPAILQSAALPF) threads the bilayer. Residues 204-268 (CPESPRFLLI…LFRAPSYRQP (65 aa)) lie on the Cytoplasmic side of the membrane. A Phosphothreonine modification is found at threonine 231. The chain crosses the membrane as a helical span at residues 269–289 (IIISIVLQLSQQLSGINAVFY). Residues 276–278 (QLS) are important for selectivity against fructose. Residues 279-280 (QQ) and asparagine 285 each bind D-glucose. At 290 to 303 (YSTGIFKDAGVKEP) the chain is on the extracellular side. The helical transmembrane segment at 304–324 (IYATIGAGVVNTIFTIVSVFL) threads the bilayer. Residue asparagine 314 coordinates D-glucose. Topologically, residues 325–330 (VERAGR) are cytoplasmic. Residues 331–351 (RTLHLIGLGGMALCSVLMTVS) form a helical membrane-spanning segment. The Extracellular portion of the chain corresponds to 352 to 362 (LLLKDKYDTMS). Residues 363–388 (LVCIAAILIYVAFFEIGPGPIPWFIV) traverse the membrane as a helical segment. 2 residues coordinate D-glucose: glutamate 377 and tryptophan 385. The Cytoplasmic segment spans residues 389 to 398 (AELFSQGPRP). The helical transmembrane segment at 399-419 (AAMAVAGCSNWTSNFLVGLLF) threads the bilayer. The Extracellular portion of the chain corresponds to 420–428 (PSAAYYLGA). A helical transmembrane segment spans residues 429-449 (YVFVIFAVFLVAFFIFTFFKV). Over 450–494 (PETRGRTFEDITRAFEGQAAEANKLGKGPTMEMNSIQPIETTTHV) the chain is Cytoplasmic. Residue serine 484 is modified to Phosphoserine. Threonine 491 is modified (phosphothreonine).

This sequence belongs to the major facilitator superfamily. Sugar transporter (TC 2.A.1.1) family. Glucose transporter subfamily. Interacts with SMIM43; the interaction may promote SLC2A3-mediated glucose transport to meet the energy needs of mesendoderm differentiation. In terms of tissue distribution, detected in stomach, placenta, lung and brain.

The protein localises to the cell membrane. It is found in the perikaryon. The protein resides in the cell projection. It carries out the reaction D-glucose(out) = D-glucose(in). It catalyses the reaction D-galactose(in) = D-galactose(out). Its activity is regulated as follows. Deoxyglucose transport is inhibited by D-glucose, D-galactose and maltose. Galactose transport is inhibited by D-glucose and maltose. Functionally, facilitative glucose transporter. Can also mediate the uptake of various other monosaccharides across the cell membrane. Mediates the uptake of glucose, 2-deoxyglucose, galactose, mannose, xylose and fucose, and probably also dehydroascorbate. Does not mediate fructose transport. Required for mesendoderm differentiation. This chain is Solute carrier family 2, facilitated glucose transporter member 3, found in Oryctolagus cuniculus (Rabbit).